The primary structure comprises 814 residues: ATP-dependent RNA helicase dbp-7 (814 aa).

The disordered stretch occupies residues 26–102; that stretch reads GGRWRDRVKA…PPPPPTHAMK (77 aa). Basic and acidic residues-rich tracts occupy residues 28-42 and 69-78; these read RWRD…EKGG and QRTEDGDSGR. The short motif at 145–174 is the Q motif element; that stretch reads ENFLSLGLSRRVSQHLATKLEMKAPTAIQK. One can recognise a Helicase ATP-binding domain in the interval 178 to 384; sequence PQLVKEDSDA…EISLEDAVHI (207 aa). ATP is bound at residue 191 to 198; sequence AETGSGKT. A DEAD box motif is present at residues 313–316; it reads DEGD. A Helicase C-terminal domain is found at 422–622; sequence RLVTLIALLK…GFATNINVPG (201 aa). 3 disordered regions span residues 464-483, 662-695, and 741-795; these read TPRA…KPNI, ESKS…PLLV, and GIGG…AGRR. Residues 467-477 show a composition bias toward basic and acidic residues; the sequence is AEPEPKPEGEA. Residues 779-790 are compositionally biased toward acidic residues; the sequence is DDDERDFGAADE.

This sequence belongs to the DEAD box helicase family. DDX31/DBP7 subfamily.

Its subcellular location is the nucleus. It localises to the nucleolus. It catalyses the reaction ATP + H2O = ADP + phosphate + H(+). ATP-binding RNA helicase involved in the biogenesis of 60S ribosomal subunits and is required for the normal formation of 25S and 5.8S rRNAs. This Neurospora crassa (strain ATCC 24698 / 74-OR23-1A / CBS 708.71 / DSM 1257 / FGSC 987) protein is ATP-dependent RNA helicase dbp-7 (dbp-7).